We begin with the raw amino-acid sequence, 310 residues long: UPF0324 membrane protein VP0936 (310 aa).

A run of 10 helical transmembrane segments spans residues 7-29 (PFGL…LVIG), 44-63 (IASF…GFGI), 75-94 (GIGL…SLIA), 104-126 (AYLI…APAI), 133-155 (IGLA…PVIG), 165-187 (FGTW…SAYG), 199-218 (LARA…IFSR), 228-250 (LVIP…FPQL), 257-279 (IFTI…ISIS), and 289-308 (LLFG…SWLV).

The protein belongs to the UPF0324 family.

Its subcellular location is the cell membrane. The sequence is that of UPF0324 membrane protein VP0936 from Vibrio parahaemolyticus serotype O3:K6 (strain RIMD 2210633).